Here is an 893-residue protein sequence, read N- to C-terminus: UPF0182 protein CLI_0022 (893 aa).

The next 7 membrane-spanning stretches (helical) occupy residues 9–29 (IPLF…NFII), 49–69 (AIII…WMYY), 94–114 (LFFI…SSSY), 154–174 (VIIS…FILE), 202–222 (LAIV…IKIW), 246–266 (FYKI…LSIV), and 273–293 (VSIC…ASFL).

It belongs to the UPF0182 family.

It is found in the cell membrane. This chain is UPF0182 protein CLI_0022, found in Clostridium botulinum (strain Langeland / NCTC 10281 / Type F).